The following is a 205-amino-acid chain: Phosphoserine phosphatase ThrH (205 aa).

The active-site Nucleophile is the Asp-7. Mg(2+) contacts are provided by Asp-7 and Glu-9. Glu-9 serves as the catalytic Proton donor. Residues Glu-15, Arg-46, 90–91, and Lys-133 contribute to the substrate site; that span reads SD. Position 152 (Asp-152) interacts with Mg(2+). Asn-155 is a substrate binding site.

The protein belongs to the thrH family. Mg(2+) is required as a cofactor.

The catalysed reaction is O-phospho-L-serine + H2O = L-serine + phosphate. The enzyme catalyses O-phospho-D-serine + H2O = D-serine + phosphate. It functions in the pathway amino-acid biosynthesis; L-serine biosynthesis; L-serine from 3-phospho-D-glycerate: step 3/3. In terms of biological role, phosphoserine phosphatase that mediates dephosphorylation of phosphoserine in the serine biosynthesis pathway. Also able to dephosphorylate other substrates such as phospho-L(or D)-threonine, with lower activity. Shows phosphoserine:homoserine phosphotransferase activity by transferring the phosphoryl group to homoserine using phosphoserine as the phosphoryl group donor. This Pseudomonas aeruginosa (strain ATCC 15692 / DSM 22644 / CIP 104116 / JCM 14847 / LMG 12228 / 1C / PRS 101 / PAO1) protein is Phosphoserine phosphatase ThrH (thrH).